A 208-amino-acid chain; its full sequence is MGMYSAIPLALPMVLLMVYGLTPSLGHSPRTPDRVSEADIQRLLHGVMEELGIARPRVEYPAHQAMNLVGPQSIEGGAHEGLQHLGPYGNIPNIVAELTGDNIPKDFREDQGYPNPPNPCPVGKTGDGCLEDTPDTAQFSREYQLHQNLYDPEHNYPGASTWNKKLLYEKIKGASQRQKRTVNPYLQGQKLDKVVAKKSVPHFSGEEE.

Positions 1-26 are cleaved as a signal peptide; it reads MGMYSAIPLALPMVLLMVYGLTPSLG. A disulfide bridge connects residues Cys-120 and Cys-129. Phosphoserine is present on Ser-204.

This sequence belongs to the 7B2 family. Interacts with pcsk2 early in the secretory pathway. Dissociation occurs at later stages. Proteolytically cleaved in the Golgi by a furin-like convertase to generate bioactive peptides. In terms of processing, sulfated on tyrosine residues.

The protein resides in the secreted. Functionally, acts as a molecular chaperone for pcsk2, preventing its premature activation in the regulated secretory pathway. Binds to inactive pcsk2 in the endoplasmic reticulum and facilitates its transport from there to later compartments of the secretory pathway where it is proteolytically matured and activated. Also required for cleavage of pcsk2 but does not appear to be involved in its folding. The chain is Neuroendocrine protein 7B2 (scg5.L) from Xenopus laevis (African clawed frog).